A 321-amino-acid chain; its full sequence is Lipoyl synthase (321 aa).

Residues Cys68, Cys73, Cys79, Cys94, Cys98, Cys101, and Ser308 each contribute to the [4Fe-4S] cluster site. Residues 80 to 297 enclose the Radical SAM core domain; the sequence is FNHGTATFMI…KDYAEEIGFT (218 aa).

It belongs to the radical SAM superfamily. Lipoyl synthase family. Requires [4Fe-4S] cluster as cofactor.

The protein localises to the cytoplasm. The catalysed reaction is [[Fe-S] cluster scaffold protein carrying a second [4Fe-4S](2+) cluster] + N(6)-octanoyl-L-lysyl-[protein] + 2 oxidized [2Fe-2S]-[ferredoxin] + 2 S-adenosyl-L-methionine + 4 H(+) = [[Fe-S] cluster scaffold protein] + N(6)-[(R)-dihydrolipoyl]-L-lysyl-[protein] + 4 Fe(3+) + 2 hydrogen sulfide + 2 5'-deoxyadenosine + 2 L-methionine + 2 reduced [2Fe-2S]-[ferredoxin]. It participates in protein modification; protein lipoylation via endogenous pathway; protein N(6)-(lipoyl)lysine from octanoyl-[acyl-carrier-protein]: step 2/2. Its function is as follows. Catalyzes the radical-mediated insertion of two sulfur atoms into the C-6 and C-8 positions of the octanoyl moiety bound to the lipoyl domains of lipoate-dependent enzymes, thereby converting the octanoylated domains into lipoylated derivatives. The chain is Lipoyl synthase from Shewanella loihica (strain ATCC BAA-1088 / PV-4).